The primary structure comprises 145 residues: D-aminoacyl-tRNA deacylase (145 aa).

The short motif at 137 to 138 (GP) is the Gly-cisPro motif, important for rejection of L-amino acids element.

Belongs to the DTD family. Homodimer.

It is found in the cytoplasm. The catalysed reaction is glycyl-tRNA(Ala) + H2O = tRNA(Ala) + glycine + H(+). It catalyses the reaction a D-aminoacyl-tRNA + H2O = a tRNA + a D-alpha-amino acid + H(+). In terms of biological role, an aminoacyl-tRNA editing enzyme that deacylates mischarged D-aminoacyl-tRNAs. Also deacylates mischarged glycyl-tRNA(Ala), protecting cells against glycine mischarging by AlaRS. Acts via tRNA-based rather than protein-based catalysis; rejects L-amino acids rather than detecting D-amino acids in the active site. By recycling D-aminoacyl-tRNA to D-amino acids and free tRNA molecules, this enzyme counteracts the toxicity associated with the formation of D-aminoacyl-tRNA entities in vivo and helps enforce protein L-homochirality. This Shewanella denitrificans (strain OS217 / ATCC BAA-1090 / DSM 15013) protein is D-aminoacyl-tRNA deacylase.